Consider the following 985-residue polypeptide: Ras and Rab interactor 3 (985 aa).

The tract at residues 1-24 is disordered; the sequence is MIRHAGAPARGDPTGPVPVVGKGE. Positions 63–158 constitute an SH2 domain; it reads WLQLSLGQAE…LLPFTLRLPQ (96 aa). Disordered stretches follow at residues 183 to 202, 251 to 293, and 315 to 531; these read SLNP…DRAP, QPPL…QPCS, and PPVP…KGSL. A compositionally biased stretch (basic and acidic residues) spans 189–201; that stretch reads ERGKPAEPPRDRA. Pro residues-rich tracts occupy residues 278–288 and 315–336; these read RRPPPPPPVLP and PPVP…PNQP. The span at 424-442 shows a compositional bias: basic and acidic residues; sequence DTPRESTEQGQDTEVKASD. Positions 587-732 are interaction with RAB5B; it reads FSSMFHAFLS…TTTDLGVTTS (146 aa). The region spanning 703–846 is the VPS9 domain; it reads HSKDGSLQQL…IKSYDKITVT (144 aa). The Ras-associating domain maps to 877 to 963; that stretch reads QDFICVSYLE…RDFHFVYRPL (87 aa).

It belongs to the RIN (Ras interaction/interference) family. Interacts with CD2AP, RAB5B, RAB31 and BIN1. In terms of tissue distribution, widely expressed.

It localises to the cytoplasm. The protein localises to the cytoplasmic vesicle. It is found in the early endosome. In terms of biological role, ras effector protein that functions as a guanine nucleotide exchange (GEF) for RAB5B and RAB31, by exchanging bound GDP for free GTP. Required for normal RAB31 function. The protein is Ras and Rab interactor 3 (RIN3) of Homo sapiens (Human).